Here is a 160-residue protein sequence, read N- to C-terminus: Protein YpjC (160 aa).

This Escherichia coli (strain K12) protein is Protein YpjC (ypjC).